Consider the following 375-residue polypeptide: Probable cytochrome c oxidase subunit 2 (375 aa).

The next 3 membrane-spanning stretches (helical) occupy residues 36–56 (LAVS…DNVW), 80–100 (IIAA…TVVF), and 122–142 (LTYT…TVVV). Cu cation contacts are provided by histidine 264, cysteine 305, cysteine 309, and histidine 313. Residues 353 to 363 (VATSTRPFNTD) show a composition bias toward polar residues. The interval 353–375 (VATSTRPFNTDRTVKSAAAPEAE) is disordered.

The protein belongs to the cytochrome c oxidase subunit 2 family. Cu cation is required as a cofactor. The cofactor is heme.

The protein resides in the cell membrane. It catalyses the reaction 4 Fe(II)-[cytochrome c] + O2 + 8 H(+)(in) = 4 Fe(III)-[cytochrome c] + 2 H2O + 4 H(+)(out). Subunits I and II form the functional core of the enzyme complex. Electrons originating in cytochrome c are transferred via heme a and Cu(A) to the binuclear center formed by heme a3 and Cu(B). The sequence is that of Probable cytochrome c oxidase subunit 2 (ctaC) from Nocardia farcinica (strain IFM 10152).